The following is a 119-amino-acid chain: MPRVKRGVTAHARHKKILDLAKGYRGRRKNVYRVAKEAVMKAGQYAYRDRRQKKREFRALWIARINAAARECGLSYSVFMNGLKKAEIEVDRKVLADLAVFDKPAFAKIAEQAKASLAI.

It belongs to the bacterial ribosomal protein bL20 family.

In terms of biological role, binds directly to 23S ribosomal RNA and is necessary for the in vitro assembly process of the 50S ribosomal subunit. It is not involved in the protein synthesizing functions of that subunit. The polypeptide is Large ribosomal subunit protein bL20 (Nitrosospira multiformis (strain ATCC 25196 / NCIMB 11849 / C 71)).